We begin with the raw amino-acid sequence, 105 residues long: Met repressor (105 aa).

It belongs to the MetJ family. In terms of assembly, homodimer.

It localises to the cytoplasm. Functionally, this regulatory protein, when combined with SAM (S-adenosylmethionine) represses the expression of the methionine regulon and of enzymes involved in SAM synthesis. This Glaesserella parasuis serovar 5 (strain SH0165) (Haemophilus parasuis) protein is Met repressor.